The primary structure comprises 204 residues: N-(5'-phosphoribosyl)anthranilate isomerase (204 aa).

This sequence belongs to the TrpF family.

The catalysed reaction is N-(5-phospho-beta-D-ribosyl)anthranilate = 1-(2-carboxyphenylamino)-1-deoxy-D-ribulose 5-phosphate. It functions in the pathway amino-acid biosynthesis; L-tryptophan biosynthesis; L-tryptophan from chorismate: step 3/5. In Bacillus cereus (strain AH820), this protein is N-(5'-phosphoribosyl)anthranilate isomerase.